A 120-amino-acid polypeptide reads, in one-letter code: Large ribosomal subunit protein uL18 (120 aa).

Belongs to the universal ribosomal protein uL18 family. In terms of assembly, part of the 50S ribosomal subunit; part of the 5S rRNA/L5/L18/L25 subcomplex. Contacts the 5S and 23S rRNAs.

In terms of biological role, this is one of the proteins that bind and probably mediate the attachment of the 5S RNA into the large ribosomal subunit, where it forms part of the central protuberance. In Bartonella tribocorum (strain CIP 105476 / IBS 506), this protein is Large ribosomal subunit protein uL18.